Reading from the N-terminus, the 419-residue chain is E3 ubiquitin-protein ligase pellino homolog 2 (419 aa).

Positions 15–202 (EPVKYRELVV…HPQGGFTEES (188 aa)) constitute an FHA; atypical domain.

The protein belongs to the pellino family. Interacts with TRAF6, IRAK4 and MAP3K7. Interacts with IRAK1. Interacts with BCL10; this interaction is impaired by SOCS3. Post-translationally, phosphorylated by IRAK1 and IRAK4 enhancing its E3 ligase activity. In terms of tissue distribution, widely expressed both in embryos and adult. Weakly or not expressed in spleen and thymus.

The enzyme catalyses S-ubiquitinyl-[E2 ubiquitin-conjugating enzyme]-L-cysteine + [acceptor protein]-L-lysine = [E2 ubiquitin-conjugating enzyme]-L-cysteine + N(6)-ubiquitinyl-[acceptor protein]-L-lysine.. It participates in protein modification; protein ubiquitination. Functionally, E3 ubiquitin ligase catalyzing the covalent attachment of ubiquitin moieties onto substrate proteins. Involved in the TLR and IL-1 signaling pathways via interaction with the complex containing IRAK kinases and TRAF6. Mediates IL1B-induced IRAK1 'Lys-63'-linked polyubiquitination and possibly 'Lys-48'-linked ubiquitination. May be important for LPS- and IL1B-induced MAP3K7-dependent, but not MAP3K3-dependent, NF-kappa-B activation. Can activate the MAP (mitogen activated protein) kinase pathway leading to activation of ELK1. The sequence is that of E3 ubiquitin-protein ligase pellino homolog 2 (Peli2) from Mus musculus (Mouse).